The primary structure comprises 173 residues: Small ribosomal subunit protein uS13 (173 aa).

Over residues 130–143 (GVRHKRGQKVRGQR) the composition is skewed to basic residues. The disordered stretch occupies residues 130–155 (GVRHKRGQKVRGQRTKSTGRTEGTIG).

It belongs to the universal ribosomal protein uS13 family. Part of the 30S ribosomal subunit. Forms a loose heterodimer with protein S19. Forms two bridges to the 50S subunit in the 70S ribosome.

Located at the top of the head of the 30S subunit, it contacts several helices of the 16S rRNA. In the 70S ribosome it contacts the 23S rRNA (bridge B1a) and protein L5 of the 50S subunit (bridge B1b), connecting the 2 subunits; these bridges are implicated in subunit movement. This is Small ribosomal subunit protein uS13 from Haloquadratum walsbyi (strain DSM 16790 / HBSQ001).